We begin with the raw amino-acid sequence, 277 residues long: Shikimate dehydrogenase (NADP(+)) (277 aa).

Shikimate is bound by residues 15 to 17 and Thr-62; that span reads SLS. Catalysis depends on Lys-66, which acts as the Proton acceptor. Residues Asn-87 and Asp-102 each contribute to the shikimate site. Residues 127 to 131, 151 to 156, and Ile-219 each bind NADP(+); these read GAGGA and NRTVSK. Residue Tyr-221 participates in shikimate binding. Position 242 (Gly-242) interacts with NADP(+).

Belongs to the shikimate dehydrogenase family. Homodimer.

The catalysed reaction is shikimate + NADP(+) = 3-dehydroshikimate + NADPH + H(+). The protein operates within metabolic intermediate biosynthesis; chorismate biosynthesis; chorismate from D-erythrose 4-phosphate and phosphoenolpyruvate: step 4/7. Involved in the biosynthesis of the chorismate, which leads to the biosynthesis of aromatic amino acids. Catalyzes the reversible NADPH linked reduction of 3-dehydroshikimate (DHSA) to yield shikimate (SA). This chain is Shikimate dehydrogenase (NADP(+)), found in Geobacillus sp. (strain WCH70).